Reading from the N-terminus, the 960-residue chain is FYVE, RhoGEF and PH domain-containing protein 1 (960 aa).

Disordered regions lie at residues 1-210 (MHGH…SSAA) and 226-355 (ASDR…REIP). S48 bears the Phosphoserine mark. Over residues 125–135 (PHPEGPQRLRS) the composition is skewed to basic and acidic residues. 3 stretches are compositionally biased toward pro residues: residues 137 to 149 (PGPP…PRPS), 156 to 165 (GPKPQVPPKP), and 173 to 190 (VLPP…PLPA). An SH3-binding motif is present at residues 171–187 (PRVLPPPEPIPPPPSRP). S205 carries the phosphoserine modification. The span at 231–251 (APGPCPVPPEPAMLPQPPPQP) shows a compositional bias: pro residues. Over residues 273–284 (RDGEKVPNRDSG) the composition is skewed to basic and acidic residues. The span at 285 to 294 (IDSISSPSNS) shows a compositional bias: low complexity. The segment covering 335 to 350 (VDSDLEEEEEEEEEEK) has biased composition (acidic residues). Positions 372–560 (KVFHIANELL…ATAAEHSNAA (189 aa)) constitute a DH domain. The 100-residue stretch at 589–688 (ELIKEGHILK…WVQAINSTLL (100 aa)) folds into the PH 1 domain. The tract at residues 701-725 (NSTNRDDEDTPPNSPNVDLGKRAPT) is disordered. Position 710 is a phosphothreonine (T710). S714 is modified (phosphoserine). Residues 729 to 789 (EKEVTMCMRC…VCTDCYVALH (61 aa)) form an FYVE-type zinc finger. 8 residues coordinate Zn(2+): C735, C738, C752, C755, C760, C763, C781, and C784. Residues 820–920 (NSVICSFLHY…WMAVLGRAGR (101 aa)) enclose the PH 2 domain. The segment at 922 to 960 (DTFCPGPTLSEDKEMEETPVAASGATAEPPEASQTRDKT) is disordered.

As to quaternary structure, interacts with DBNL/ABP1 and CTTN. Binds CDC42. May interact with CCPG1.

Its subcellular location is the cytoplasm. The protein resides in the cell projection. It localises to the lamellipodium. The protein localises to the ruffle. It is found in the cytoskeleton. In terms of biological role, activates CDC42, a member of the Ras-like family of Rho- and Rac proteins, by exchanging bound GDP for free GTP. Plays a role in regulating the actin cytoskeleton and cell shape. This is FYVE, RhoGEF and PH domain-containing protein 1 (Fgd1) from Mus musculus (Mouse).